The chain runs to 489 residues: GDP-fucose protein O-fucosyltransferase 4 (489 aa).

The Cytoplasmic segment spans residues 1-7 (MAARCTE). Residues 8-24 (AVLAALGVLSVCSASSS) form a helical; Signal-anchor for type II membrane protein membrane-spanning segment. Residues 25 to 489 (GSEASGEAER…EIFMKRNKNL (465 aa)) are Lumenal-facing. An N-linked (GlcNAc...) asparagine glycan is attached at N162. Residues C385 and C388 are joined by a disulfide bond.

Belongs to the glycosyltransferase 10 family. Widely expressed. Expressed at slightly higher level in heart, kidney and lung.

The protein resides in the endoplasmic reticulum membrane. The enzyme catalyses L-threonyl-[protein] + GDP-beta-L-fucose = 3-O-(alpha-L-fucosyl)-L-threonyl-[protein] + GDP + H(+). The catalysed reaction is L-seryl-[protein] + GDP-beta-L-fucose = 3-O-(alpha-L-fucosyl)-L-seryl-[protein] + GDP + H(+). The protein operates within protein modification; protein glycosylation. Protein O-fucosyltransferase that specifically catalyzes O-fucosylation of serine or threonine residues in EMI domains of target proteins, such as MMRN1, MMRN2 and EMID1. Attaches fucose through an O-glycosidic linkage. O-fucosylation of EMI domain-containing proteins may be required for facilitating protein folding and secretion. Also shows minor alpha-(1,3)-fucosyltransferase activity toward activity toward biantennary N-glycan acceptors. However, this was tested with a library of synthetic substrates and this activity is unsure in vivo. The protein is GDP-fucose protein O-fucosyltransferase 4 (Fut11) of Mus musculus (Mouse).